Reading from the N-terminus, the 491-residue chain is Glutamate--tRNA ligase (491 aa).

The short motif at 13–23 is the 'HIGH' region element; sequence PSPTGFLHIGN. Cys110, Cys112, Cys137, and His139 together coordinate Zn(2+). Positions 254 to 258 match the 'KMSKS' region motif; that stretch reads KLSKR. Lys257 contacts ATP.

This sequence belongs to the class-I aminoacyl-tRNA synthetase family. Glutamate--tRNA ligase type 1 subfamily. In terms of assembly, monomer. Zn(2+) serves as cofactor.

The protein resides in the cytoplasm. It carries out the reaction tRNA(Glu) + L-glutamate + ATP = L-glutamyl-tRNA(Glu) + AMP + diphosphate. In terms of biological role, catalyzes the attachment of glutamate to tRNA(Glu) in a two-step reaction: glutamate is first activated by ATP to form Glu-AMP and then transferred to the acceptor end of tRNA(Glu). This Listeria monocytogenes serotype 4b (strain F2365) protein is Glutamate--tRNA ligase.